The chain runs to 89 residues: MSVTKEIKTDIINQFGGSEKNTGQTEVQIALFSRRISDLTGHLKLHPKDKHSRHGLLKLVGKRKSLVAYLKKTDIGRYRKVLADLDLRK.

Belongs to the universal ribosomal protein uS15 family. Part of the 30S ribosomal subunit. Forms a bridge to the 50S subunit in the 70S ribosome, contacting the 23S rRNA.

One of the primary rRNA binding proteins, it binds directly to 16S rRNA where it helps nucleate assembly of the platform of the 30S subunit by binding and bridging several RNA helices of the 16S rRNA. Its function is as follows. Forms an intersubunit bridge (bridge B4) with the 23S rRNA of the 50S subunit in the ribosome. In Chlorobium phaeobacteroides (strain BS1), this protein is Small ribosomal subunit protein uS15.